A 338-amino-acid chain; its full sequence is Glyceraldehyde-3-phosphate dehydrogenase (338 aa).

Residues 12–13 (RI), Asp34, and Arg79 contribute to the NAD(+) site. D-glyceraldehyde 3-phosphate contacts are provided by residues 150-152 (SCT), Thr181, 210-211 (TG), and Arg233. Cys151 acts as the Nucleophile in catalysis. Asn316 provides a ligand contact to NAD(+).

It belongs to the glyceraldehyde-3-phosphate dehydrogenase family. Homotetramer.

The protein localises to the cytoplasm. It carries out the reaction D-glyceraldehyde 3-phosphate + phosphate + NAD(+) = (2R)-3-phospho-glyceroyl phosphate + NADH + H(+). It functions in the pathway carbohydrate degradation; glycolysis; pyruvate from D-glyceraldehyde 3-phosphate: step 1/5. The chain is Glyceraldehyde-3-phosphate dehydrogenase (GPD) from Phaffia rhodozyma (Yeast).